A 122-amino-acid polypeptide reads, in one-letter code: Small ribosomal subunit protein uS13 (122 aa).

A disordered region spans residues 96–122; sequence PVRGQRTRTNARTRKGPKKTVGVRRAK.

It belongs to the universal ribosomal protein uS13 family. In terms of assembly, part of the 30S ribosomal subunit. Forms a loose heterodimer with protein S19. Forms two bridges to the 50S subunit in the 70S ribosome.

In terms of biological role, located at the top of the head of the 30S subunit, it contacts several helices of the 16S rRNA. In the 70S ribosome it contacts the 23S rRNA (bridge B1a) and protein L5 of the 50S subunit (bridge B1b), connecting the 2 subunits; these bridges are implicated in subunit movement. Contacts the tRNAs in the A and P-sites. This chain is Small ribosomal subunit protein uS13, found in Halothermothrix orenii (strain H 168 / OCM 544 / DSM 9562).